The sequence spans 573 residues: Acyl-coenzyme A synthetase ACSM1, mitochondrial (573 aa).

Residues 1-35 constitute a mitochondrion transit peptide; sequence MQWLKSFQICKVLQGFSLSPTQLHRRLFSRVGAPR. K81 is subject to N6-succinyllysine. N6-acetyllysine; alternate is present on K142. N6-succinyllysine; alternate is present on K142. K179 carries the post-translational modification N6-succinyllysine. K200 is subject to N6-acetyllysine; alternate. Position 200 is an N6-succinyllysine; alternate (K200). At K210 the chain carries N6-acetyllysine. 222–230 provides a ligand contact to ATP; it reads TSGTTGYPK. 2 positions are modified to N6-succinyllysine: K233 and K324. K352 and K387 each carry N6-acetyllysine; alternate. K352 and K387 each carry N6-succinyllysine; alternate. The ATP site is built by D448 and R463. K501 carries the N6-succinyllysine modification. K527 carries the post-translational modification N6-acetyllysine. K534 is subject to N6-acetyllysine; alternate. K534 carries the N6-succinyllysine; alternate modification. An N6-acetyllysine modification is found at K545. ATP is bound at residue K559.

Belongs to the ATP-dependent AMP-binding enzyme family. In terms of assembly, monomer. Mg(2+) is required as a cofactor. It depends on Mn(2+) as a cofactor. As to expression, highly expressed in liver and kidney.

It localises to the mitochondrion matrix. The protein resides in the mitochondrion. The catalysed reaction is a medium-chain fatty acid + ATP + CoA = a medium-chain fatty acyl-CoA + AMP + diphosphate. The enzyme catalyses benzoate + ATP + CoA = benzoyl-CoA + AMP + diphosphate. It catalyses the reaction (R)-lipoate + GTP + H(+) = (R)-lipoyl-GMP + diphosphate. It carries out the reaction octanoate + ATP + CoA = octanoyl-CoA + AMP + diphosphate. The catalysed reaction is decanoate + ATP + CoA = decanoyl-CoA + AMP + diphosphate. The enzyme catalyses dodecanoate + ATP + CoA = dodecanoyl-CoA + AMP + diphosphate. It catalyses the reaction tetradecanoate + ATP + CoA = tetradecanoyl-CoA + AMP + diphosphate. It carries out the reaction hexanoate + ATP + CoA = hexanoyl-CoA + AMP + diphosphate. The catalysed reaction is butanoate + ATP + CoA = butanoyl-CoA + AMP + diphosphate. The enzyme catalyses hexadecanoate + ATP + CoA = hexadecanoyl-CoA + AMP + diphosphate. Functionally, catalyzes the activation of fatty acids by CoA to produce an acyl-CoA, the first step in fatty acid metabolism. Capable of activating medium-chain fatty acids (e.g. butyric (C4) to decanoic (C10) acids), and certain carboxylate-containing xenobiotics, e.g. benzoate. Also catalyzes the activation of lipoate to lipoyl-nucleoside monophosphate. Activates lipoate with GTP at a 1000-fold higher rate than with ATP and activates both (R)- and (S)-lipoate to the respective lipoyl-GMP, with a preference for (R)-lipoate. The chain is Acyl-coenzyme A synthetase ACSM1, mitochondrial (Acsm1) from Mus musculus (Mouse).